The primary structure comprises 187 residues: Alkyl hydroperoxide reductase C (187 aa).

The region spanning 2-157 (SLINTKIKPF…LLRKIKAAQY (156 aa)) is the Thioredoxin domain. The active-site Cysteine sulfenic acid (-SOH) intermediate is Cys47.

The protein belongs to the peroxiredoxin family. AhpC/Prx1 subfamily. Homodimer; disulfide-linked, upon oxidation. 5 homodimers assemble to form a ring-like decamer.

The protein localises to the cytoplasm. The catalysed reaction is a hydroperoxide + NADH + H(+) = an alcohol + NAD(+) + H2O. Functionally, thiol-specific peroxidase that catalyzes the reduction of hydrogen peroxide and organic hydroperoxides to water and alcohols, respectively. Plays a role in cell protection against oxidative stress by detoxifying peroxides. The protein is Alkyl hydroperoxide reductase C (ahpC) of Salmonella typhi.